The sequence spans 147 residues: E3 ubiquitin-protein ligase RNF181 homolog (147 aa).

An RING-type; atypical zinc finger spans residues 70 to 111 (CSVCKEPAEEGQKYRILPCKHEFHEECILLWLKKTNSCPLCR).

It belongs to the RNF181 family.

It carries out the reaction S-ubiquitinyl-[E2 ubiquitin-conjugating enzyme]-L-cysteine + [acceptor protein]-L-lysine = [E2 ubiquitin-conjugating enzyme]-L-cysteine + N(6)-ubiquitinyl-[acceptor protein]-L-lysine.. The protein operates within protein modification; protein ubiquitination. Its function is as follows. E3 ubiquitin-protein ligase which accepts ubiquitin from an E2 ubiquitin-conjugating enzyme in the form of a thioester and then directly transfers the ubiquitin to targeted substrates. This is E3 ubiquitin-protein ligase RNF181 homolog from Drosophila melanogaster (Fruit fly).